A 215-amino-acid chain; its full sequence is Oligoribonuclease (215 aa).

Residues 5 to 170 (LVWIDCEMTG…ADIHESIREL (166 aa)) form the Exonuclease domain. Residue Tyr-127 is part of the active site. A disordered region spans residues 196–215 (LGPPGKDAADTDSAAGHTTG).

This sequence belongs to the oligoribonuclease family.

It is found in the cytoplasm. 3'-to-5' exoribonuclease specific for small oligoribonucleotides. In Mycobacterium sp. (strain JLS), this protein is Oligoribonuclease.